We begin with the raw amino-acid sequence, 258 residues long: tRNA pseudouridine synthase A (258 aa).

Aspartate 52 (nucleophile) is an active-site residue. Residue tyrosine 110 coordinates substrate.

Belongs to the tRNA pseudouridine synthase TruA family. As to quaternary structure, homodimer.

It carries out the reaction uridine(38/39/40) in tRNA = pseudouridine(38/39/40) in tRNA. Functionally, formation of pseudouridine at positions 38, 39 and 40 in the anticodon stem and loop of transfer RNAs. In Francisella tularensis subsp. holarctica (strain LVS), this protein is tRNA pseudouridine synthase A.